Here is a 330-residue protein sequence, read N- to C-terminus: Protein RfbI (330 aa).

Positions 3-89 constitute a 2Fe-2S ferredoxin-type domain; it reads HIIKIFPSNI…ELNAHFFPEL (87 aa). Residues Cys-37, Cys-42, and Cys-45 each contribute to the [2Fe-2S] cluster site. An FAD-binding FR-type domain is found at 94–192; it reads KKIVPCKVNS…EGPCGTFFIR (99 aa).

It depends on [2Fe-2S] cluster as a cofactor.

Its pathway is bacterial outer membrane biogenesis; LPS O-antigen biosynthesis. The protein is Protein RfbI (rfbI) of Salmonella typhimurium (strain LT2 / SGSC1412 / ATCC 700720).